A 196-amino-acid polypeptide reads, in one-letter code: V-type proton ATPase subunit E (196 aa).

It belongs to the V-ATPase E subunit family.

Functionally, produces ATP from ADP in the presence of a proton gradient across the membrane. This Clostridium botulinum (strain Eklund 17B / Type B) protein is V-type proton ATPase subunit E.